The chain runs to 463 residues: UDP-N-acetylmuramoylalanine--D-glutamate ligase (463 aa).

109 to 115 (GTDGKST) lines the ATP pocket.

This sequence belongs to the MurCDEF family.

Its subcellular location is the cytoplasm. The enzyme catalyses UDP-N-acetyl-alpha-D-muramoyl-L-alanine + D-glutamate + ATP = UDP-N-acetyl-alpha-D-muramoyl-L-alanyl-D-glutamate + ADP + phosphate + H(+). It functions in the pathway cell wall biogenesis; peptidoglycan biosynthesis. Functionally, cell wall formation. Catalyzes the addition of glutamate to the nucleotide precursor UDP-N-acetylmuramoyl-L-alanine (UMA). This Leptospira interrogans serogroup Icterohaemorrhagiae serovar Lai (strain 56601) protein is UDP-N-acetylmuramoylalanine--D-glutamate ligase.